A 105-amino-acid chain; its full sequence is Large ribosomal subunit protein eL36 (105 aa).

The protein belongs to the eukaryotic ribosomal protein eL36 family. In terms of assembly, component of the large ribosomal subunit.

It localises to the cytoplasm. It is found in the cytosol. Functionally, component of the large ribosomal subunit. The ribosome is a large ribonucleoprotein complex responsible for the synthesis of proteins in the cell. This Danio rerio (Zebrafish) protein is Large ribosomal subunit protein eL36 (rpl36).